We begin with the raw amino-acid sequence, 226 residues long: ATP-dependent Clp protease proteolytic subunit 2 (226 aa).

Ser118 acts as the Nucleophile in catalysis. Residue His143 is part of the active site.

This sequence belongs to the peptidase S14 family. Fourteen ClpP subunits assemble into 2 heptameric rings which stack back to back to give a disk-like structure with a central cavity, resembling the structure of eukaryotic proteasomes.

It localises to the cytoplasm. It catalyses the reaction Hydrolysis of proteins to small peptides in the presence of ATP and magnesium. alpha-casein is the usual test substrate. In the absence of ATP, only oligopeptides shorter than five residues are hydrolyzed (such as succinyl-Leu-Tyr-|-NHMec, and Leu-Tyr-Leu-|-Tyr-Trp, in which cleavage of the -Tyr-|-Leu- and -Tyr-|-Trp bonds also occurs).. Its function is as follows. Cleaves peptides in various proteins in a process that requires ATP hydrolysis. Has a chymotrypsin-like activity. Plays a major role in the degradation of misfolded proteins. This Synechocystis sp. (strain ATCC 27184 / PCC 6803 / Kazusa) protein is ATP-dependent Clp protease proteolytic subunit 2.